Here is a 512-residue protein sequence, read N- to C-terminus: MEQQFDYFTVTSLLVFLTFLLRLVWGWKKSSDKIKIRLPPGPSKLPIIGSLHHLIGLDVDLPYYALTDLANKYGPLMHLQLGKMSLVVASSAKMFKELMKENDLAISQRPVPYVARVLEDAGRDIAFVPYGDYWRQIRKISRMELFSVKKVQSLHYIREDQSSKLVESIRGHAGTVMNLSKAVSDYTSTVVARAAFGSGCKDQDKFIRLSLEMVAAAGAVSTLPDMFPALGFIPILSGKKAFLKSIQTEADKILDVIIDEHIQKTKSNEYDGKESDKEDIVDVLLRLEKSGELEIPITTQDIKAVIWSVFAGGTDTSSTTTLWTMSELMRNPKVMEKVQAEIREKLKGKKEIYESDIQDLHYMRAVIKEALRLRIPGPLLLPRETMEPIEVDGYVIPERTKILFNAWAVTRDPQLWENPESFIPERFIENPLDYKGTNYEFTPFGSGRRICPGMNFGIANVELPLAKLLYFFNWQLPPGMQPHELDMTAKFGVVCGRKNDLFLIPTPYNNIP.

The chain crosses the membrane as a helical span at residues 7–27; the sequence is YFTVTSLLVFLTFLLRLVWGW. A heme-binding site is contributed by Cys-451.

Belongs to the cytochrome P450 family. Heme serves as cofactor. As to expression, accumulates in mature fruits and in juice vesicles.

Its subcellular location is the membrane. It catalyses the reaction tirucalla-7,24-dien-3beta-ol + 2 reduced [NADPH--hemoprotein reductase] + 2 O2 = dihydroniloticin + 2 oxidized [NADPH--hemoprotein reductase] + 2 H2O + 2 H(+). Its pathway is secondary metabolite biosynthesis; terpenoid biosynthesis. Its function is as follows. Monooxygenase involved in the biosynthesis of limonoids triterpene natural products such as limonin, a compound with insecticidal activity responsible for the bitter taste in citrus. Catalyzes the conversion of tirucalladienol to dihydroniloticin. The sequence is that of Dihydroniloticin synthase CYP71CD1 from Citrus sinensis (Sweet orange).